We begin with the raw amino-acid sequence, 305 residues long: Cytochrome c biogenesis protein CcsA (305 aa).

8 helical membrane-spanning segments follow: residues 4 to 24, 32 to 52, 58 to 78, 91 to 111, 136 to 156, 212 to 232, 246 to 263, and 275 to 295; these read VLGLGLFAFALLLLALPLAFW, SGLVTLLIATANLALTAQLVL, GHFPISNLYESLCFLAWACTL, IVAAAATPMGLGCIAFASFAL, VIMVSYAALLVGSLLSVAVLV, TITVGFLLLTVGIISGAVWAN, TWALICWLVYAAYLHTRL, and VASAGLVVIGVCYIGVNLLGI.

It belongs to the CcmF/CycK/Ccl1/NrfE/CcsA family. May interact with ccs1.

The protein localises to the cellular thylakoid membrane. In terms of biological role, required during biogenesis of c-type cytochromes (cytochrome c6 and cytochrome f) at the step of heme attachment. This Synechococcus sp. (strain CC9311) protein is Cytochrome c biogenesis protein CcsA.